The primary structure comprises 103 residues: Small ribosomal subunit protein uS10 (103 aa).

This sequence belongs to the universal ribosomal protein uS10 family. Part of the 30S ribosomal subunit.

Involved in the binding of tRNA to the ribosomes. This chain is Small ribosomal subunit protein uS10, found in Chromohalobacter salexigens (strain ATCC BAA-138 / DSM 3043 / CIP 106854 / NCIMB 13768 / 1H11).